The sequence spans 1164 residues: DNA-directed RNA polymerase (1164 aa).

The protein belongs to the RNA polymerase beta chain family. As to quaternary structure, the DNA-dependent RNA polymerase used for intermediate and late genes expression consists of eight subunits 147 kDa, 133 kDa, 35 kDa, 30 kDa, 22 kDa, 19 kDa, 18 kDa and 7 kDa totalling more than 500 kDa in mass. The same holoenzyme, with the addition of the transcription-specificity factor RAP94, is used for early gene expression.

The protein localises to the virion. It carries out the reaction RNA(n) + a ribonucleoside 5'-triphosphate = RNA(n+1) + diphosphate. Functionally, part of the DNA-dependent RNA polymerase which catalyzes the transcription of viral DNA into RNA using the four ribonucleoside triphosphates as substrates. Responsible for the transcription of early, intermediate and late genes. DNA-dependent RNA polymerase associates with the early transcription factor (ETF), itself composed of OPG118 and OPG133, thereby allowing the early genes transcription. Late transcription, and probably also intermediate transcription, require newly synthesized RNA polymerase. This chain is DNA-directed RNA polymerase (OPG151), found in Monkeypox virus.